A 75-amino-acid chain; its full sequence is Putative antitoxin PH1062.1 (75 aa).

This sequence belongs to the UPF0330 family.

Functionally, possibly the antitoxin component of a type II toxin-antitoxin (TA) system. This Pyrococcus horikoshii (strain ATCC 700860 / DSM 12428 / JCM 9974 / NBRC 100139 / OT-3) protein is Putative antitoxin PH1062.1.